Reading from the N-terminus, the 929-residue chain is von Willebrand factor C and EGF domain-containing protein (929 aa).

The first 21 residues, 1 to 21 (MWARLLLHVAYILIPLLGSSA), serve as a signal peptide directing secretion. Residues 70–98 (LCSFGCGSGICIAPNVCSCQDGEQGATCP) enclose the EGF-like 1 domain. The EGF-like 2; calcium-binding domain maps to 142-180 (DIDECLSSSCEGHCVNTEGGFVCECGPGMQLSADRHSCQ). Disulfide bonds link Cys146–Cys155, Cys151–Cys164, Cys166–Cys179, Cys185–Cys194, Cys190–Cys203, Cys205–Cys218, Cys224–Cys237, Cys233–Cys246, and Cys248–Cys261. The EGF-like 3; calcium-binding domain maps to 181 to 219 (DTDECLGTPCQQRCKNSIGSYKCSCRAGFHLHGNRHSCI). In terms of domain architecture, EGF-like 4; calcium-binding spans 220–262 (DVNECRRPQERRVCHHTCHNTVGSFLCTCRPGFRLRSDRVSCE). 2 disordered regions span residues 291 to 317 (AGRP…RTIS) and 339 to 374 (PSSS…LGAG). Positions 339–353 (PSSSPLGTLGPPSLL) are enriched in low complexity. VWFC domains follow at residues 376–433 (SSCW…PSCT), 433–494 (TGCF…GRCY), 491–552 (GRCY…FTCR), 558–618 (TGCS…PDCS), 619–677 (AGCT…PVCH), and 677–762 (HDCN…VNCS). Residues Asn454 and Asn464 are each glycosylated (N-linked (GlcNAc...) asparagine). The segment at 731 to 774 (PLEEKQQPSPHGELAKAARNARGDTEVPVNCSSCPGPPSASPTR) is disordered. Residues 743–755 (ELAKAARNARGDT) show a composition bias toward basic and acidic residues. Asn787 carries N-linked (GlcNAc...) asparagine glycosylation. Positions 791–807 (IQSASPSPPIAQTSSSP) are enriched in polar residues. Disordered regions lie at residues 791–861 (IQSA…SSTF) and 879–929 (AETP…NSTI). Residues 889–903 (LSETLTTSSSSQRLS) show a composition bias toward low complexity.

It localises to the secreted. Its function is as follows. May be a regulatory element in the beta-catenin signaling pathway and a target for chemoprevention of hapatocellular carcinoma. The protein is von Willebrand factor C and EGF domain-containing protein (Vwce) of Mus musculus (Mouse).